A 297-amino-acid chain; its full sequence is MAGAQRVYKQRIRSTQTLKKMFRAMELIAASRITRAREHARAAAPYSRALTRAVSAVATHTQIDHPLTTDRADTNRVAMLVVTADRGQAGAYNTTILREAERLAAQLIEEGKEPQLYVTGRRGVGYYTFRHREIVKSWTGGSDNPEVSTAEEIADTLLEAFRAPVAEGGVSEIHLVYTRFASMVSQEPRVVRMLPLEVVEGVVEAGGDVLPLYEFEPSPEAVLDALLPRYIRSRVFNALLQASASELAARQRAMHTATENAEDLIRKYTRLANTARQAEITQEISEIVSGADAMAAS.

It belongs to the ATPase gamma chain family. As to quaternary structure, F-type ATPases have 2 components, CF(1) - the catalytic core - and CF(0) - the membrane proton channel. CF(1) has five subunits: alpha(3), beta(3), gamma(1), delta(1), epsilon(1). CF(0) has three main subunits: a, b and c.

It is found in the cell membrane. Its function is as follows. Produces ATP from ADP in the presence of a proton gradient across the membrane. The gamma chain is believed to be important in regulating ATPase activity and the flow of protons through the CF(0) complex. This is ATP synthase gamma chain from Beutenbergia cavernae (strain ATCC BAA-8 / DSM 12333 / CCUG 43141 / JCM 11478 / NBRC 16432 / NCIMB 13614 / HKI 0122).